The following is a 683-amino-acid chain: Glycine--tRNA ligase beta subunit (683 aa).

Belongs to the class-II aminoacyl-tRNA synthetase family. As to quaternary structure, tetramer of two alpha and two beta subunits.

Its subcellular location is the cytoplasm. It catalyses the reaction tRNA(Gly) + glycine + ATP = glycyl-tRNA(Gly) + AMP + diphosphate. The polypeptide is Glycine--tRNA ligase beta subunit (Pseudomonas putida (strain GB-1)).